The primary structure comprises 256 residues: Thiazole synthase (256 aa).

Lys96 acts as the Schiff-base intermediate with DXP in catalysis. 1-deoxy-D-xylulose 5-phosphate is bound by residues Gly157, 183–184, and 205–206; these read AG and NT.

Belongs to the ThiG family. As to quaternary structure, homotetramer. Forms heterodimers with either ThiH or ThiS.

The protein resides in the cytoplasm. It carries out the reaction [ThiS sulfur-carrier protein]-C-terminal-Gly-aminoethanethioate + 2-iminoacetate + 1-deoxy-D-xylulose 5-phosphate = [ThiS sulfur-carrier protein]-C-terminal Gly-Gly + 2-[(2R,5Z)-2-carboxy-4-methylthiazol-5(2H)-ylidene]ethyl phosphate + 2 H2O + H(+). The protein operates within cofactor biosynthesis; thiamine diphosphate biosynthesis. Catalyzes the rearrangement of 1-deoxy-D-xylulose 5-phosphate (DXP) to produce the thiazole phosphate moiety of thiamine. Sulfur is provided by the thiocarboxylate moiety of the carrier protein ThiS. In vitro, sulfur can be provided by H(2)S. This Bacillus cereus (strain ATCC 10987 / NRS 248) protein is Thiazole synthase.